The sequence spans 161 residues: Regulator of ribonuclease activity A (161 aa).

The protein belongs to the RraA family. In terms of assembly, homotrimer. Binds to both RNA-binding sites in the C-terminal region of Rne and to RhlB.

It localises to the cytoplasm. Functionally, globally modulates RNA abundance by binding to RNase E (Rne) and regulating its endonucleolytic activity. Can modulate Rne action in a substrate-dependent manner by altering the composition of the degradosome. Modulates RNA-binding and helicase activities of the degradosome. The sequence is that of Regulator of ribonuclease activity A from Salmonella agona (strain SL483).